A 192-amino-acid chain; its full sequence is Fe/S biogenesis protein NfuA (192 aa).

Residues cysteine 149 and cysteine 152 each coordinate [4Fe-4S] cluster.

The protein belongs to the NfuA family. Homodimer. The cofactor is [4Fe-4S] cluster.

Its function is as follows. Involved in iron-sulfur cluster biogenesis. Binds a 4Fe-4S cluster, can transfer this cluster to apoproteins, and thereby intervenes in the maturation of Fe/S proteins. Could also act as a scaffold/chaperone for damaged Fe/S proteins. The protein is Fe/S biogenesis protein NfuA of Tolumonas auensis (strain DSM 9187 / NBRC 110442 / TA 4).